Reading from the N-terminus, the 444-residue chain is Exodeoxyribonuclease 7 large subunit (444 aa).

This sequence belongs to the XseA family. In terms of assembly, heterooligomer composed of large and small subunits.

The protein resides in the cytoplasm. The catalysed reaction is Exonucleolytic cleavage in either 5'- to 3'- or 3'- to 5'-direction to yield nucleoside 5'-phosphates.. Its function is as follows. Bidirectionally degrades single-stranded DNA into large acid-insoluble oligonucleotides, which are then degraded further into small acid-soluble oligonucleotides. The protein is Exodeoxyribonuclease 7 large subunit of Xylella fastidiosa (strain M23).